We begin with the raw amino-acid sequence, 5161 residues long: Nonribosomal peptide synthetase TES (5161 aa).

Residues 37 to 436 (EEQAIARPNA…GRKDSQTKVR (400 aa)) form an adenylation 1 region. One can recognise a Carrier 1 domain in the interval 569–645 (QPETEKEQIL…KLTSAAIPSV (77 aa)). Position 606 is an O-(pantetheine 4'-phosphoryl)serine (Ser-606). Residues 659–1098 (GHVAQSFAQG…LLCDVELSKL (440 aa)) form a condensation 1 region. Positions 1122–1522 (RQQTSLCPSR…GRMDGQVKIR (401 aa)) are adenylation 2. A methyltransferase (M) domain 1 region spans residues 1630–1742 (MNEWLDDTID…YLFKTTQQLL (113 aa)). One can recognise a Carrier 2 domain in the interval 2068-2141 (TRAESKIQQL…QLAAVAQEHV (74 aa)). Ser-2102 bears the O-(pantetheine 4'-phosphoryl)serine mark. The segment at 2179–2593 (EDIYPCSPLQ…MLTQDDEQQL (415 aa)) is condensation 2. Residues 2614 to 3010 (DQAKSRPEAD…GRKDGQVKVR (397 aa)) are adenylation 3. Residues 3139 to 3215 (KPETKHEMAL…RLANRLVDPP (77 aa)) enclose the Carrier 3 domain. Ser-3176 carries the post-translational modification O-(pantetheine 4'-phosphoryl)serine. Residues 3232-3668 (LQSFAQGRLW…VVPLMTVEAH (437 aa)) are condensation 3. The interval 3694-4098 (FRQQAAMQPS…GRIDGQVKIR (405 aa)) is adenylation 4. A methyltransferase (M) domain 2 region spans residues 4203–4329 (EMKEWLEETI…KVDGVKTLFF (127 aa)). Residues 4643-4725 (RELSTAELKV…QFSQHEGEQK (83 aa)) enclose the Carrier 4 domain. Ser-4680 carries the post-translational modification O-(pantetheine 4'-phosphoryl)serine. Residues 4785-5093 (FFLNLGTRVD…HQNLNEHPEF (309 aa)) are condensation 4.

It belongs to the NRP synthetase family.

Its pathway is phytotoxin biosynthesis. Its function is as follows. Nonribosomal peptide synthetase; part of the gene cluster that mediates the biosynthesis of the phytotoxin tentoxin, an inhibitor the F1-ATPase activity of chloroplasts, resulting in chlorosis in sensitive plants. Tentoxin is a cyclic tetrapeptide that consists of four amino acid residues: glycine (Gly), alanine (Ala), leucine (Leu), and dehydrophenylalanine (DPhe). In addition, both the Ala and DPhe residues are N-methylated. The nonribosomal peptide synthetase TES assembles tentoxin from the four substrate amino acids. The adenylation domains of each of the 4 modules are responsible for the activation of Gly, Ala, Leu and DPhe, respectively. In addition, the N-methyltransferase domains in the second and fourth modules of TES could be responsible for N-methylation of Ala and DPhe residues. Finally, the condensation domain located in the termination module probably catalyzes the formation of the intramolecular macrocyclization and then the release of tentoxin. The cytochrome P450 monooxygenase TES1 is predicted to be involved in the formation of DPhe. The sequence is that of Nonribosomal peptide synthetase TES from Alternaria alternata (Alternaria rot fungus).